The following is a 309-amino-acid chain: Protein FdhE (309 aa).

Belongs to the FdhE family.

The protein resides in the cytoplasm. Functionally, necessary for formate dehydrogenase activity. The polypeptide is Protein FdhE (Escherichia coli O9:H4 (strain HS)).